The primary structure comprises 238 residues: MSEKPDLRQRCSDIYREIKEKKLTVVKQGAEAITIKTEFYPGEVCLLKCRPAKRWRHPILDQKLSRKRCLVEARLLAKCHYVGIKCPMLYFIDANRGQIYMEWIDGPCVRDYIREICECEIEKKLIPLMKRIGSEVAKMHKNDIVHGDLTTSNMMLESHNNPVPIFIDFGLGSVSESEEDKAVDIYVLERALSSTLPESESLFHHVLDSYAQSWKQSKATLRRFEEVRMRGRKRTMIG.

In terms of domain architecture, Protein kinase spans Glu-20–Gly-238. Residues Val-26–Thr-34 and Lys-48 each bind ATP. Asp-148 acts as the Proton acceptor in catalysis.

This sequence belongs to the protein kinase superfamily. BUD32 family. In terms of assembly, component of the EKC/KEOPS complex composed of at least SPAP27G11.07c/BUD32, cgi121, gon7, pgp2 and SPAC4H3.13/PCC1; the whole complex dimerizes.

The protein localises to the cytoplasm. It is found in the nucleus. It localises to the chromosome. Its subcellular location is the telomere. It catalyses the reaction L-seryl-[protein] + ATP = O-phospho-L-seryl-[protein] + ADP + H(+). The catalysed reaction is L-threonyl-[protein] + ATP = O-phospho-L-threonyl-[protein] + ADP + H(+). In terms of biological role, component of the EKC/KEOPS complex that is required for the formation of a threonylcarbamoyl group on adenosine at position 37 (t(6)A37) in tRNAs that read codons beginning with adenine. The complex is probably involved in the transfer of the threonylcarbamoyl moiety of threonylcarbamoyl-AMP (TC-AMP) to the N6 group of A37. BUD32 has ATPase activity in the context of the EKC/KEOPS complex and likely plays a supporting role to the catalytic subunit KAE1. The EKC/KEOPS complex also promotes both telomere uncapping and telomere elongation. The complex is required for efficient recruitment of transcriptional coactivators. In Schizosaccharomyces pombe (strain 972 / ATCC 24843) (Fission yeast), this protein is EKC/KEOPS complex subunit SPAP27G11.07c.